The chain runs to 145 residues: Transcription factor MEE8 (145 aa).

The segment covering 33-49 has biased composition (basic and acidic residues); the sequence is EKGVEKVGQKRSAESRR. Residues 33–61 form a disordered region; that stretch reads EKGVEKVGQKRSAESRREGKKKRVKTQCV. A bHLH domain is found at 66 to 115; sequence DKSDHDTLLKKKRRERIRRQLETLKEITPNCPQSDINAILDCVIEYTNNL.

As to quaternary structure, homodimer.

It localises to the nucleus. Functionally, required during early embryo development, for the endosperm formation. The chain is Transcription factor MEE8 (MEE8) from Arabidopsis thaliana (Mouse-ear cress).